Reading from the N-terminus, the 470-residue chain is Aminoacyl transferase sphA (470 aa).

3 residues coordinate pyridoxal 5'-phosphate: Ser-212, His-244, and Thr-272. An N6-(pyridoxal phosphate)lysine modification is found at Lys-275.

The protein belongs to the class-II pyridoxal-phosphate-dependent aminotransferase family. BioF subfamily. Homodimer. It depends on pyridoxal 5'-phosphate as a cofactor.

The catalysed reaction is aminomalonate + (3R)-hydroxyoctadeca-4,10-dienoyl-[ACP] = 3-oxopresphingofungin + holo-[ACP] + CO2. It participates in secondary metabolite biosynthesis. Its function is as follows. Aminoacyl transferase; part of the gene cluster that mediates the biosynthesis of sphingofungins, bioactive molecules acting as sphingolipid inhibitors via inhibiting serine palmitoyl transferase (SPT). Within the pathway, sphA transfers aminomalonate onto the sphB product 3-hydroxyoctadeca-4,10-dienoyl-ACP to produce 3-keto-presphingofungin. The substrate specificity of sphA using only aminomalonate in Aspergillus fumigatus is responsible for the biosynthesis of sphingofungins B and C but not E and F like in Byssochlamys spectabilis. The PKS sphB does not contain any putative thioesterase domain for releasing the nascent polyketide chain and it has been suggested that aminoacyl transferases can facilitate the polyketide chain release. Sphingofungin biosynthesis starts with the PKS sphB that produces an C18 polyketide precursor 3-hydroxyoctadeca-4,10-dienoyl-ACP containing one delta-6 desaturation and one delta-12 desaturation. The aminoacyl transferase sphA uses the sphB product to produce 3-keto-presphingofungin by adding an aminomalonate molecule. SphF then reduces the C-3 ketone of 3-keto-presphingofungin which leads to presphingofungin. The cytochrome P450 monooxygenase sphH converts presphingofungin into sphingofungin B1 which is further converted to sphingofungin B by the dioxygenase sphC. SphC is also able to convert presphingofungin into sphingofungin B2. The acetyltransferase sphE acetylates sphingofungin B to produce sphingofungin C, but can also convert sphingofungin B1 into sphingofungin C1 and sphingofungin B2 into sphingofungin C2. Finally, sphingofungin C can be spontaneously converted into sphingofungin D. The chain is Aminoacyl transferase sphA from Aspergillus fumigatus (strain CBS 144.89 / FGSC A1163 / CEA10) (Neosartorya fumigata).